Consider the following 412-residue polypeptide: Gamma-glutamyl phosphate reductase (412 aa).

The protein belongs to the gamma-glutamyl phosphate reductase family.

The protein resides in the cytoplasm. The enzyme catalyses L-glutamate 5-semialdehyde + phosphate + NADP(+) = L-glutamyl 5-phosphate + NADPH + H(+). It functions in the pathway amino-acid biosynthesis; L-proline biosynthesis; L-glutamate 5-semialdehyde from L-glutamate: step 2/2. Catalyzes the NADPH-dependent reduction of L-glutamate 5-phosphate into L-glutamate 5-semialdehyde and phosphate. The product spontaneously undergoes cyclization to form 1-pyrroline-5-carboxylate. The polypeptide is Gamma-glutamyl phosphate reductase (Actinobacillus pleuropneumoniae serotype 3 (strain JL03)).